The chain runs to 118 residues: Large ribosomal subunit protein bL20 (118 aa).

The protein belongs to the bacterial ribosomal protein bL20 family.

Functionally, binds directly to 23S ribosomal RNA and is necessary for the in vitro assembly process of the 50S ribosomal subunit. It is not involved in the protein synthesizing functions of that subunit. This is Large ribosomal subunit protein bL20 from Ralstonia pickettii (strain 12J).